The following is an 891-amino-acid chain: 26S proteasome non-ATPase regulatory subunit 2 homolog B (891 aa).

The disordered stretch occupies residues 1 to 43; the sequence is MAPVPDPNSVGGGAKRDEATTKIPSKDSKKKDDKKEEDLSEED. Over residues 14–37 the composition is skewed to basic and acidic residues; the sequence is AKRDEATTKIPSKDSKKKDDKKEE. PC repeat units lie at residues 414-447, 448-484, 485-519, 522-556, 565-594, 674-705, and 724-739; these read SAVA…PVVA, GALL…SVRI, GAIM…PLDV, FAAL…AELG, LGLG…KIRK, LALG…EVAM, and AGML…KDAS.

It belongs to the proteasome subunit S2 family. As to quaternary structure, component of the 19S regulatory particle (RP/PA700) base subcomplex of the 26S proteasome. The 26S proteasome is composed of a core protease (CP), known as the 20S proteasome, capped at one or both ends by the 19S regulatory particle (RP/PA700). The RP/PA700 complex is composed of at least 17 different subunits in two subcomplexes, the base and the lid, which form the portions proximal and distal to the 20S proteolytic core, respectively. In terms of processing, ubiquitinated. Expressed in stems, leaves, buds, flowers, siliques and developing seeds.

Acts as a regulatory subunit of the 26 proteasome which is involved in the ATP-dependent degradation of ubiquitinated proteins. This Arabidopsis thaliana (Mouse-ear cress) protein is 26S proteasome non-ATPase regulatory subunit 2 homolog B (RPN1B).